A 129-amino-acid chain; its full sequence is Lysozyme C (129 aa).

A C-type lysozyme domain is found at 1–129 (KVYGRCELAA…VNAWTRGCRL (129 aa)). 4 disulfide bridges follow: Cys6/Cys127, Cys30/Cys115, Cys64/Cys80, and Cys76/Cys94. Catalysis depends on residues Glu35 and Asp52.

Belongs to the glycosyl hydrolase 22 family. In terms of assembly, monomer.

The protein resides in the secreted. It catalyses the reaction Hydrolysis of (1-&gt;4)-beta-linkages between N-acetylmuramic acid and N-acetyl-D-glucosamine residues in a peptidoglycan and between N-acetyl-D-glucosamine residues in chitodextrins.. Lysozymes have primarily a bacteriolytic function; those in tissues and body fluids are associated with the monocyte-macrophage system and enhance the activity of immunoagents. This Syrmaticus soemmerringii (Copper pheasant) protein is Lysozyme C (LYZ).